The chain runs to 786 residues: Constitutive coactivator of peroxisome proliferator-activated receptor gamma (786 aa).

The mediates transactivation of PPARG stretch occupies residues 1 to 561; it reads MGVRGLQGFV…GTPSLEVLWL (561 aa). Disordered stretches follow at residues 371–413 and 738–786; these read PNQE…KLPS and HWDS…WRRY. Positions 750-771 are enriched in polar residues; the sequence is QGYSSYRTDSTHGHSGQSWRNQ.

The protein belongs to the constitutive coactivator of PPAR-gamma family. Interacts with ESR1 and RXRA. Interacts with PPARG; in a ligand-independent manner. Ubiquitously expressed (at protein level).

The protein localises to the nucleus. Functions as a transactivator of PPARG and ESR1. Functions in adipogenesis through PPARG activation. The polypeptide is Constitutive coactivator of peroxisome proliferator-activated receptor gamma (Fam120b) (Mus musculus (Mouse)).